The primary structure comprises 492 residues: NAD(P)H-quinone oxidoreductase subunit 2 A, chloroplastic (492 aa).

13 consecutive transmembrane segments (helical) span residues 6-26, 39-59, 81-101, 106-126, 131-151, 165-185, 209-229, 277-297, 305-325, 329-349, 377-397, 400-420, and 466-486; these read LLLF…GLIL, TPWL…ALLF, VFQF…VEYI, MAIT…MFLC, LITI…LSGY, YLLM…WLYG, PGIS…LSPA, WHLL…LIAI, MLAY…IVGD, GYAS…GTFA, ALSS…AGFF, LHLF…IGLL, and MIVC…IIAI.

This sequence belongs to the complex I subunit 2 family. NDH is composed of at least 16 different subunits, 5 of which are encoded in the nucleus.

It is found in the plastid. It localises to the chloroplast thylakoid membrane. The catalysed reaction is a plastoquinone + NADH + (n+1) H(+)(in) = a plastoquinol + NAD(+) + n H(+)(out). The enzyme catalyses a plastoquinone + NADPH + (n+1) H(+)(in) = a plastoquinol + NADP(+) + n H(+)(out). In terms of biological role, NDH shuttles electrons from NAD(P)H:plastoquinone, via FMN and iron-sulfur (Fe-S) centers, to quinones in the photosynthetic chain and possibly in a chloroplast respiratory chain. The immediate electron acceptor for the enzyme in this species is believed to be plastoquinone. Couples the redox reaction to proton translocation, and thus conserves the redox energy in a proton gradient. This is NAD(P)H-quinone oxidoreductase subunit 2 A, chloroplastic from Illicium oligandrum (Star anise).